The sequence spans 479 residues: Ribosomal RNA small subunit methyltransferase F (479 aa).

S-adenosyl-L-methionine is bound by residues 125-131, Glu-149, Asp-176, and Asp-194; that span reads AAAPGSK. The active-site Nucleophile is Cys-247.

The protein belongs to the class I-like SAM-binding methyltransferase superfamily. RsmB/NOP family.

It localises to the cytoplasm. The enzyme catalyses cytidine(1407) in 16S rRNA + S-adenosyl-L-methionine = 5-methylcytidine(1407) in 16S rRNA + S-adenosyl-L-homocysteine + H(+). Its function is as follows. Specifically methylates the cytosine at position 1407 (m5C1407) of 16S rRNA. The sequence is that of Ribosomal RNA small subunit methyltransferase F from Escherichia coli O6:H1 (strain CFT073 / ATCC 700928 / UPEC).